A 258-amino-acid polypeptide reads, in one-letter code: Tryptophan synthase alpha chain (258 aa).

Catalysis depends on proton acceptor residues glutamate 47 and aspartate 58.

It belongs to the TrpA family. As to quaternary structure, tetramer of two alpha and two beta chains.

The catalysed reaction is (1S,2R)-1-C-(indol-3-yl)glycerol 3-phosphate + L-serine = D-glyceraldehyde 3-phosphate + L-tryptophan + H2O. The protein operates within amino-acid biosynthesis; L-tryptophan biosynthesis; L-tryptophan from chorismate: step 5/5. Its function is as follows. The alpha subunit is responsible for the aldol cleavage of indoleglycerol phosphate to indole and glyceraldehyde 3-phosphate. The sequence is that of Tryptophan synthase alpha chain from Bacillus anthracis (strain CDC 684 / NRRL 3495).